Here is a 478-residue protein sequence, read N- to C-terminus: Zinc finger C3HC-type protein 1-like (478 aa).

The segment at 93–147 adopts a C3HC-type zinc-finger fold; it reads CAKYGWSNIECDMLKCSSCNAYLCASLQPVLDFSKYKQRCVELQEALRKAHEKFC. The disordered stretch occupies residues 285–389; the sequence is LSAPNTPVSP…SSSSDTSPRG (105 aa). Positions 351 to 363 are enriched in polar residues; it reads SMGQGESSGLSNE. Residues 377–388 are compositionally biased toward low complexity; sequence LCSSSSSDTSPR.

Phosphorylated. May also be weakly phosphorylated on Tyr residues.

The protein resides in the nucleus. The protein localises to the nucleus envelope. Functionally, required for proper positioning of a substantial amount of TPR at the nuclear basket (NB) through interaction with TPR. In Xenopus tropicalis (Western clawed frog), this protein is Zinc finger C3HC-type protein 1-like (zc3hc1).